The sequence spans 472 residues: Probable dipeptidase A (472 aa).

Cys10 is a catalytic residue.

It belongs to the peptidase C69 family.

It catalyses the reaction an L-aminoacyl-L-amino acid + H2O = 2 an L-alpha-amino acid. This is Probable dipeptidase A (pepDA) from Streptococcus pyogenes serotype M18 (strain MGAS8232).